Reading from the N-terminus, the 518-residue chain is Probable high-affinity hexose transporter ght7 (518 aa).

The Cytoplasmic portion of the chain corresponds to 1–27 (MRDFQSRFADRYNQITNSYSYSSSRQG). A helical membrane pass occupies residues 28–48 (LITGMVNVGSFFGCLLSSPVA). At 49 to 54 (DKIGKR) the chain is on the extracellular side. The helical transmembrane segment at 55-75 (LSIIVWTTVYLIGIIIQVTTV) threads the bilayer. The Cytoplasmic segment spans residues 76–77 (PS). The chain crosses the membrane as a helical span at residues 78-98 (WVQILVAKIWTGLSIGALSVI). At 99 to 112 (TPGYQSEVAPAIMR) the chain is on the extracellular side. Residues 113 to 133 (GAIVTTYQLFITLGIFIAACI) traverse the membrane as a helical segment. Topologically, residues 134 to 149 (NMGTHKYSHGTTAQWR) are cytoplasmic. A helical membrane pass occupies residues 150–170 (ISIGINLLWGIITLVGIIFLP). The Extracellular portion of the chain corresponds to 171–236 (ESPRYLIAIG…IFNANIRYRT (66 aa)). Residues 237–257 (FLGMAVMMFQQLTGANYYFYY) traverse the membrane as a helical segment. The Cytoplasmic segment spans residues 258–271 (GTQVFRGTGMDSPY). Residues 272–292 (LAALIPDAVNCGCTFGAIFVL) form a helical membrane-spanning segment. Over 293 to 298 (EFFGRR) the chain is Extracellular. The helical transmembrane segment at 299–319 (SPLIVGGIWQYICFFIYAAVG) threads the bilayer. At 320-333 (DRALYHKNGTSNHR) the chain is on the cytoplasmic side. A helical membrane pass occupies residues 334 to 354 (AGAVMIVFSCLFIFSFSQTWA). The Extracellular segment spans residues 355–374 (PAAYVIVGESYPVRYRSKCA). A helical transmembrane segment spans residues 375–395 (AVATSANWFWNFLISFFTPFI). Over 396-402 (TNSIGFK) the chain is Cytoplasmic. A helical transmembrane segment spans residues 403–423 (YGYIFASCNLTGAAIIFLFVH). At 424–518 (ETKGRTLEEI…IRPDKREPRL (95 aa)) the chain is on the extracellular side. Polar residues predominate over residues 477 to 506 (IENTDNQGDSGSFQTSTPDDSRPEQNQASA). The segment at 477–518 (IENTDNQGDSGSFQTSTPDDSRPEQNQASATYIRPDKREPRL) is disordered.

Belongs to the major facilitator superfamily. Sugar transporter (TC 2.A.1.1) family.

The protein localises to the membrane. In Schizosaccharomyces pombe (strain 972 / ATCC 24843) (Fission yeast), this protein is Probable high-affinity hexose transporter ght7 (ght7).